Consider the following 146-residue polypeptide: Hemoglobin subunit beta (146 aa).

Positions 2–146 (HWTAEEKQLI…VAHALARKYH (145 aa)) constitute a Globin domain. The heme b site is built by His63 and His92.

It belongs to the globin family. As to quaternary structure, heterotetramer of two alpha chains and two beta chains. Red blood cells.

Its function is as follows. Involved in oxygen transport from the lung to the various peripheral tissues. This Aquila chrysaetos (Golden eagle) protein is Hemoglobin subunit beta (HBB).